A 748-amino-acid polypeptide reads, in one-letter code: Serine/threonine-protein kinase CG17528 (748 aa).

Polar residues-rich tracts occupy residues 22 to 35 (QASP…SVPS) and 47 to 59 (EKTN…QEDN). Disordered regions lie at residues 22–41 (QASP…NVVT) and 47–81 (EKTN…ELDD). Ser-67, Ser-70, Ser-73, Ser-87, Ser-88, and Ser-89 each carry phosphoserine. Thr-91 bears the Phosphothreonine mark. Ser-93 is modified (phosphoserine). A Phosphothreonine modification is found at Thr-100. 2 Doublecortin domains span residues 158 to 244 (LRIK…VEYN) and 313 to 396 (RIVT…AEDF). In terms of domain architecture, Protein kinase spans 477 to 735 (YSLGRIIGDG…SEDILDHSWT (259 aa)). Residues 483 to 491 (IGDGNFAIV) and Lys-506 contribute to the ATP site. The Proton acceptor role is filled by Asp-598.

The protein belongs to the protein kinase superfamily. CAMK Ser/Thr protein kinase family. CaMK subfamily.

The catalysed reaction is L-seryl-[protein] + ATP = O-phospho-L-seryl-[protein] + ADP + H(+). It catalyses the reaction L-threonyl-[protein] + ATP = O-phospho-L-threonyl-[protein] + ADP + H(+). This is Serine/threonine-protein kinase CG17528 from Drosophila melanogaster (Fruit fly).